The chain runs to 741 residues: MLKLFSAFRKNKIWDFNGGIHPPEMKTQSNGTPLRQVPLAQRFVIPLKQHIGAEGELCVSVGDKVLRGQPLTRGRGKMLPVHAPTSGTVTAIAPHSTSHPSALAELSVIIDADGEDCWIPRDGWADYRSRSREELIERIHQFGVAGLGGAGFPTGVKLQGGGDKIETLIINAAECEPYITADDRLMQDCAAQVVEGIRILAHILQPREILIGIEDNKPQAISMLRAVLADSHDISLRVIPTKYPSGGAKQLTYILTGKQVPHGGRSSDIGVLMQNVGTAYAVKRAVIDGEPITERVVTLTGEAIARPGNVWARLGTPVRHLLNDAGFCPSADQMVIMGGPLMGFTLPWLDVPVVKITNCLLAPSANELGEPQEEQSCIRCSACADACPADLLPQQLYWFSKGQQHDKATTHNIADCIECGACAWVCPSNIPLVQYFRQEKAEIAAIRQEEKRAAEAKARFEARQARLEREKAARLERHKSAAVQPAAKDKDAIAAALARVKEKQAQATQPIVIKAGERPDNSAIIAAREARKAQARAKQAELQQTNDAATVADPRKTAVEAAIARAKARKLEQQQANAEPEQQVDPRKAAVEAAIARAKARKLEQQQANAEPEEQIDPRKAAVEAAIARAKARKLEQQQQANAEPEEQVDPRKAAVEAAIARAKARKLEQQQANAEPEEQIDPRKAAVEAAIARAKARKLEQQQANAEPEEQIDPRKAAVAAAIARVQAKKAAQQKVVNED.

4Fe-4S ferredoxin-type domains follow at residues 369–397 (GEPQ…QQLY) and 407–436 (KATT…VQYF). C377, C380, C383, C387, C416, C419, C422, and C426 together coordinate [4Fe-4S] cluster. The interval 627 to 654 (IARAKARKLEQQQQANAEPEEQVDPRKA) is disordered.

This sequence belongs to the 4Fe4S bacterial-type ferredoxin family. RnfC subfamily. The complex is composed of six subunits: RsxA, RsxB, RsxC, RsxD, RsxE and RsxG. It depends on [4Fe-4S] cluster as a cofactor.

It localises to the cell inner membrane. In terms of biological role, part of a membrane-bound complex that couples electron transfer with translocation of ions across the membrane. Required to maintain the reduced state of SoxR. The polypeptide is Ion-translocating oxidoreductase complex subunit C (Escherichia coli O127:H6 (strain E2348/69 / EPEC)).